The chain runs to 211 residues: Small ribosomal subunit protein uS3 (211 aa).

A KH type-2 domain is found at 38–106 (LRSFVKKTFH…DVELHIVEVK (69 aa)).

This sequence belongs to the universal ribosomal protein uS3 family. As to quaternary structure, part of the 30S ribosomal subunit. Forms a tight complex with proteins S10 and S14.

Binds the lower part of the 30S subunit head. Binds mRNA in the 70S ribosome, positioning it for translation. This chain is Small ribosomal subunit protein uS3, found in Anaplasma marginale (strain Florida).